The chain runs to 161 residues: 6,7-dimethyl-8-ribityllumazine synthase (161 aa).

Residues tryptophan 31, 63-65 (SFE), and 85-87 (VVI) each bind 5-amino-6-(D-ribitylamino)uracil. (2S)-2-hydroxy-3-oxobutyl phosphate is bound at residue 90–91 (GT). Residue histidine 93 is the Proton donor of the active site. Phenylalanine 118 serves as a coordination point for 5-amino-6-(D-ribitylamino)uracil. Arginine 132 serves as a coordination point for (2S)-2-hydroxy-3-oxobutyl phosphate.

The protein belongs to the DMRL synthase family.

It catalyses the reaction (2S)-2-hydroxy-3-oxobutyl phosphate + 5-amino-6-(D-ribitylamino)uracil = 6,7-dimethyl-8-(1-D-ribityl)lumazine + phosphate + 2 H2O + H(+). Its pathway is cofactor biosynthesis; riboflavin biosynthesis; riboflavin from 2-hydroxy-3-oxobutyl phosphate and 5-amino-6-(D-ribitylamino)uracil: step 1/2. Its function is as follows. Catalyzes the formation of 6,7-dimethyl-8-ribityllumazine by condensation of 5-amino-6-(D-ribitylamino)uracil with 3,4-dihydroxy-2-butanone 4-phosphate. This is the penultimate step in the biosynthesis of riboflavin. The polypeptide is 6,7-dimethyl-8-ribityllumazine synthase (Pseudarthrobacter chlorophenolicus (strain ATCC 700700 / DSM 12829 / CIP 107037 / JCM 12360 / KCTC 9906 / NCIMB 13794 / A6) (Arthrobacter chlorophenolicus)).